The primary structure comprises 202 residues: Superoxide dismutase [Mn] (202 aa).

Histidine 27 is a binding site for Mn(2+). Residues threonine 34 and threonine 70 each carry the phosphothreonine modification. Positions 82, 164, and 168 each coordinate Mn(2+).

It belongs to the iron/manganese superoxide dismutase family. In terms of assembly, homodimer. Requires Mn(2+) as cofactor.

It carries out the reaction 2 superoxide + 2 H(+) = H2O2 + O2. Its function is as follows. Destroys superoxide anion radicals which are normally produced within the cells and which are toxic to biological systems. This is Superoxide dismutase [Mn] (sodA) from Halalkalibacterium halodurans (strain ATCC BAA-125 / DSM 18197 / FERM 7344 / JCM 9153 / C-125) (Bacillus halodurans).